Consider the following 445-residue polypeptide: Homogentisate 1,2-dioxygenase (445 aa).

Lys-98 carries the N6-acetyllysine modification. Positions 335, 341, and 371 each coordinate Fe cation. Lys-414 bears the N6-succinyllysine mark.

It belongs to the homogentisate dioxygenase family. Homohexamer arranged as a dimer of trimers. Fe cation serves as cofactor.

It catalyses the reaction homogentisate + O2 = 4-maleylacetoacetate + H(+). Its pathway is amino-acid degradation; L-phenylalanine degradation; acetoacetate and fumarate from L-phenylalanine: step 4/6. Catalyzes the conversion of homogentisate to maleylacetoacetate. The sequence is that of Homogentisate 1,2-dioxygenase (Hgd) from Mus musculus (Mouse).